The primary structure comprises 172 residues: MLTYKTFKILGREILIGVVWEEKIQGIAYSLDGLEFLKDQLSRVTSHLKSRGVKVNLLEEKSRYPDLVFDVLKGKIGNEKGFEELSLEGLTRFEIKVYSWLVKNVKRGEVITYGKVAKALKTSPIAVGGAMKRNPYPIIVPCHRVVGKNNPWLYTPKPSYKKFLLEVEGWIS.

C142 serves as the catalytic Nucleophile; methyl group acceptor.

This sequence belongs to the MGMT family.

It localises to the cytoplasm. It carries out the reaction a 6-O-methyl-2'-deoxyguanosine in DNA + L-cysteinyl-[protein] = S-methyl-L-cysteinyl-[protein] + a 2'-deoxyguanosine in DNA. It catalyses the reaction a 4-O-methyl-thymidine in DNA + L-cysteinyl-[protein] = a thymidine in DNA + S-methyl-L-cysteinyl-[protein]. Its function is as follows. Involved in the cellular defense against the biological effects of O6-methylguanine (O6-MeG) and O4-methylthymine (O4-MeT) in DNA. Repairs the methylated nucleobase in DNA by stoichiometrically transferring the methyl group to a cysteine residue in the enzyme. This is a suicide reaction: the enzyme is irreversibly inactivated. In Pyrococcus horikoshii (strain ATCC 700860 / DSM 12428 / JCM 9974 / NBRC 100139 / OT-3), this protein is Methylated-DNA--protein-cysteine methyltransferase.